The sequence spans 353 residues: Photosystem II D2 protein (353 aa).

Thr2 is modified (N-acetylthreonine). Thr2 carries the phosphothreonine modification. The chain crosses the membrane as a helical span at residues Cys41–Thr61. His118 provides a ligand contact to chlorophyll a. A helical transmembrane segment spans residues Gly125–Pro141. Pheophytin a is bound by residues Gln130 and Asn143. The chain crosses the membrane as a helical span at residues Val153 to Ser166. His198 contributes to the chlorophyll a binding site. Residues Ala208–Asp228 traverse the membrane as a helical segment. Positions 215 and 262 each coordinate a plastoquinone. A Fe cation-binding site is contributed by His215. His269 lines the Fe cation pocket. Residues Gly279–Arg295 form a helical membrane-spanning segment.

The protein belongs to the reaction center PufL/M/PsbA/D family. PSII is composed of 1 copy each of membrane proteins PsbA, PsbB, PsbC, PsbD, PsbE, PsbF, PsbH, PsbI, PsbJ, PsbK, PsbL, PsbM, PsbT, PsbX, PsbY, PsbZ, Psb30/Ycf12, at least 3 peripheral proteins of the oxygen-evolving complex and a large number of cofactors. It forms dimeric complexes. It depends on The D1/D2 heterodimer binds P680, chlorophylls that are the primary electron donor of PSII, and subsequent electron acceptors. It shares a non-heme iron and each subunit binds pheophytin, quinone, additional chlorophylls, carotenoids and lipids. There is also a Cl(-1) ion associated with D1 and D2, which is required for oxygen evolution. The PSII complex binds additional chlorophylls, carotenoids and specific lipids. as a cofactor.

The protein resides in the plastid. It localises to the chloroplast thylakoid membrane. The enzyme catalyses 2 a plastoquinone + 4 hnu + 2 H2O = 2 a plastoquinol + O2. Its function is as follows. Photosystem II (PSII) is a light-driven water:plastoquinone oxidoreductase that uses light energy to abstract electrons from H(2)O, generating O(2) and a proton gradient subsequently used for ATP formation. It consists of a core antenna complex that captures photons, and an electron transfer chain that converts photonic excitation into a charge separation. The D1/D2 (PsbA/PsbD) reaction center heterodimer binds P680, the primary electron donor of PSII as well as several subsequent electron acceptors. D2 is needed for assembly of a stable PSII complex. The sequence is that of Photosystem II D2 protein from Nymphaea alba (White water-lily).